The following is a 362-amino-acid chain: Acetylajmalan esterase 2 (362 aa).

An N-terminal signal peptide occupies residues 1-23; sequence MGFAARPFHIVFSLFVLAGATQA. Serine 38 functions as the Nucleophile in the catalytic mechanism. N-linked (GlcNAc...) asparagine glycosylation is found at asparagine 100, asparagine 118, asparagine 151, and asparagine 202. Catalysis depends on residues aspartate 335 and histidine 338.

Belongs to the 'GDSL' lipolytic enzyme family. Confined to roots.

It carries out the reaction 17-O-acetylnorajmaline + H2O = norajmaline + acetate + H(+). The enzyme catalyses 17-O-acetylajmaline + H2O = ajmaline + acetate + H(+). It functions in the pathway alkaloid biosynthesis; ajmaline biosynthesis. Acetylesterase involved in the biosynthesis of ajmaline-type monoterpenoid indole alkaloids (MIAs) natural products, important plant-derived pharmaceuticals used in the therapy of heart disorders. Deacetylates 17-O-acetylnorajmaline to produce norajmaline. May also catalyze the conversion of 17-O-acetylajmaline to ajmaline. The polypeptide is Acetylajmalan esterase 2 (Rauvolfia serpentina (Serpentine wood)).